The sequence spans 192 residues: MAAEPVEDNCISFVEMKFINNTLYFVAENGDLESDHFGKLEPKLSIIRNLNDQVLFISQGNQPVFEDMPDSDCSDNAPQTIFIIYMYKDSLTRGLAVTISVQCKKMSTLSCENKIISFKEMNPPDNIDNEGSDIIFFQRSVPGHDDKIQFESSLYKGYFLACKKENDLFKLILKRQDDNRDKSVMFTVQNQN.

Residues 1 to 35 constitute a propeptide that is removed on maturation; it reads MAAEPVEDNCISFVEMKFINNTLYFVAENGDLESD.

It belongs to the IL-1 family. As to quaternary structure, forms a ternary complex with ligand-binding receptor subunit IL18R1 and signaling receptor subunit IL18RAP at the plasma membrane. Mature IL18 first binds to IL18R1 forming a low affinity binary complex, which then interacts with IL18RAP to form a high affinity ternary complex that signals inside the cell. Interacts with cargo receptor TMED10; the interaction mediates the translocation from the cytoplasm into the ERGIC (endoplasmic reticulum-Golgi intermediate compartment) and thereby secretion. Post-translationally, the pro-IL-18 precursor is processed by CASP1, CASP4 or CASP5 to yield its mature, active form. The pro-IL-18 precursor features autoinhibitory interactions between the propeptide and the post-cleavage-site region, preventing recognition by the IL18R1 receptor. Processing by CASP1, CASP4 or CASP5 induces conformational changes to generate critical receptor-binding sites. The mature form is then secreted and released in the extracellular milieu by passing through the gasdermin-D (GSDMD) pore. In contrast, cleavage by CASP3 inactivates IL18.

Its subcellular location is the cytoplasm. It is found in the cytosol. The protein localises to the secreted. Its function is as follows. Pro-inflammatory cytokine primarily involved in epithelial barrier repair, polarized T-helper 1 (Th1) cell and natural killer (NK) cell immune responses. Upon binding to IL18R1 and IL18RAP, forms a signaling ternary complex which activates NF-kappa-B, triggering synthesis of inflammatory mediators. Synergizes with IL12/interleukin-12 to induce IFNG synthesis from T-helper 1 (Th1) cells and natural killer (NK) cells. Involved in transduction of inflammation downstream of pyroptosis: its mature form is specifically released in the extracellular milieu by passing through the gasdermin-D (GSDMD) pore. The polypeptide is Interleukin-18 (IL18) (Capra hircus (Goat)).